Reading from the N-terminus, the 36-residue chain is Conotoxin Bu21 (36 aa).

A propeptide spanning residues 1-21 (DGANAEATDNKPGVFERDEKK) is cleaved from the precursor. Cystine bridges form between cysteine 22-cysteine 28 and cysteine 23-cysteine 34.

It belongs to the conotoxin A superfamily. In terms of tissue distribution, expressed by the venom duct.

It localises to the secreted. The protein is Conotoxin Bu21 of Conus bullatus (Bubble cone).